We begin with the raw amino-acid sequence, 173 residues long: Phosphopantetheine adenylyltransferase (173 aa).

Position 9 (Thr-9) interacts with substrate. ATP contacts are provided by residues 9 to 10 (TF) and His-17. Substrate is bound by residues Lys-41, Thr-75, and Arg-89. ATP is bound by residues 90–92 (GLR), Glu-100, and 125–131 (HIYLSSS).

Belongs to the bacterial CoaD family. Homohexamer. Mg(2+) serves as cofactor.

Its subcellular location is the cytoplasm. It catalyses the reaction (R)-4'-phosphopantetheine + ATP + H(+) = 3'-dephospho-CoA + diphosphate. It functions in the pathway cofactor biosynthesis; coenzyme A biosynthesis; CoA from (R)-pantothenate: step 4/5. Its function is as follows. Reversibly transfers an adenylyl group from ATP to 4'-phosphopantetheine, yielding dephospho-CoA (dPCoA) and pyrophosphate. This chain is Phosphopantetheine adenylyltransferase, found in Methylacidiphilum infernorum (isolate V4) (Methylokorus infernorum (strain V4)).